The sequence spans 378 residues: Chaperone protein DnaJ (378 aa).

Residues 5–69 (EFYDRLGVSK…QKRAAYDQYG (65 aa)) enclose the J domain. Residues 135–217 (GTEKEVKYHR…CHGTGHEKQA (83 aa)) form a CR-type zinc finger. The Zn(2+) site is built by Cys148, Cys151, Cys165, Cys168, Cys191, Cys194, Cys205, and Cys208. 4 CXXCXGXG motif repeats span residues 148 to 155 (CRTCNGSG), 165 to 172 (CGRCHGAG), 191 to 198 (CDVCHGRG), and 205 to 212 (CTTCHGTG).

It belongs to the DnaJ family. In terms of assembly, homodimer. Zn(2+) serves as cofactor.

Its subcellular location is the cytoplasm. Participates actively in the response to hyperosmotic and heat shock by preventing the aggregation of stress-denatured proteins and by disaggregating proteins, also in an autonomous, DnaK-independent fashion. Unfolded proteins bind initially to DnaJ; upon interaction with the DnaJ-bound protein, DnaK hydrolyzes its bound ATP, resulting in the formation of a stable complex. GrpE releases ADP from DnaK; ATP binding to DnaK triggers the release of the substrate protein, thus completing the reaction cycle. Several rounds of ATP-dependent interactions between DnaJ, DnaK and GrpE are required for fully efficient folding. Also involved, together with DnaK and GrpE, in the DNA replication of plasmids through activation of initiation proteins. This chain is Chaperone protein DnaJ, found in Streptococcus pneumoniae serotype 4 (strain ATCC BAA-334 / TIGR4).